The following is a 1480-amino-acid chain: Cystic fibrosis transmembrane conductance regulator (1480 aa).

The Cytoplasmic portion of the chain corresponds to methionine 1 to phenylalanine 77. A helical transmembrane segment spans residues phenylalanine 78–glutamine 98. The region spanning phenylalanine 81–leucine 365 is the ABC transmembrane type-1 1 domain. The Extracellular segment spans residues proline 99–tyrosine 122. Residues leucine 123–histidine 146 traverse the membrane as a helical segment. At histidine 147 to leucine 195 the chain is on the cytoplasmic side. A helical transmembrane segment spans residues alanine 196 to tryptophan 216. Residues glutamate 217–serine 222 are Extracellular-facing. A helical transmembrane segment spans residues alanine 223–methionine 243. Residues methionine 244–lysine 298 lie on the Cytoplasmic side of the membrane. The helical transmembrane segment at alanine 299–phenylalanine 319 threads the bilayer. At leucine 320 to threonine 339 the chain is on the extracellular side. A helical membrane pass occupies residues isoleucine 340–valine 358. Topologically, residues glutamine 359–serine 858 are cytoplasmic. ATP is bound by residues tryptophan 401, serine 434, glycine 458 to threonine 465, and glutamine 493. Residues asparagine 423–glycine 646 form the ABC transporter 1 domain. The S-palmitoyl cysteine moiety is linked to residue cysteine 524. Phosphoserine is present on residues serine 549 and serine 660. The segment at serine 654–glutamate 831 is disordered R region. Serine 670 is subject to Phosphoserine; by PKA. Serine 686 carries the phosphoserine modification. Residue lysine 688 forms a Glycyl lysine isopeptide (Lys-Gly) (interchain with G-Cter in ubiquitin) linkage. Phosphoserine is present on residues serine 700 and serine 712. A Phosphothreonine modification is found at threonine 717. Phosphoserine is present on residues serine 737, serine 753, serine 768, serine 790, serine 795, and serine 813. A helical transmembrane segment spans residues leucine 859–valine 879. The region spanning leucine 859–serine 1155 is the ABC transmembrane type-1 2 domain. Topologically, residues valine 880–isoleucine 918 are extracellular. N-linked (GlcNAc...) asparagine glycosylation is found at asparagine 894, asparagine 900, and asparagine 909. A discontinuously helical transmembrane segment spans residues tyrosine 919 to histidine 939. The Cytoplasmic segment spans residues threonine 940 to threonine 990. A helical membrane pass occupies residues isoleucine 991–leucine 1011. Topologically, residues glutamine 1012 to proline 1013 are extracellular. The helical transmembrane segment at tyrosine 1014–leucine 1034 threads the bilayer. At glutamine 1035–threonine 1095 the chain is on the cytoplasmic side. Residues leucine 1096 to phenylalanine 1116 traverse the membrane as a helical segment. Over isoleucine 1117–glycine 1130 the chain is Extracellular. The helical transmembrane segment at isoleucine 1131–isoleucine 1151 threads the bilayer. Residues aspartate 1152–leucine 1480 are Cytoplasmic-facing. Residues methionine 1210–histidine 1443 enclose the ABC transporter 2 domain. ATP is bound by residues tyrosine 1219 and glycine 1244–serine 1251. The tract at residues arginine 1386–leucine 1480 is interaction with GORASP2. A lipid anchor (S-palmitoyl cysteine) is attached at cysteine 1395. Phosphoserine is present on residues serine 1444 and serine 1456. Positions histidine 1452–leucine 1480 are disordered. Residues glutamate 1470–leucine 1480 are compositionally biased toward acidic residues. The PDZ-binding motif lies at threonine 1478 to leucine 1480.

Belongs to the ABC transporter superfamily. ABCC family. CFTR transporter (TC 3.A.1.202) subfamily. Monomer; does not require oligomerization for channel activity. May form oligomers in the membrane. Interacts with SLC26A3, SLC26A6 and NHERF1. Interacts with SHANK2. Interacts with MYO6. Interacts (via C-terminus) with GOPC (via PDZ domain); this promotes CFTR internalization and thereby decreases channel activity. Interacts with SLC4A7 through NHERF1. Found in a complex with MYO5B and RAB11A. Interacts with ANO1. Interacts with SLC26A8. Interacts with AHCYL1; the interaction increases CFTR activity. Interacts with CSE1L. The core-glycosylated form interacts with GORASP2 (via PDZ GRASP-type 1 domain) in respone to ER stress. Interacts with MARCHF2; the interaction leads to CFTR ubiqtuitination and degradation. Interacts with ADGRG2. Post-translationally, N-glycosylated. In terms of processing, phosphorylated; cAMP treatment promotes phosphorylation and activates the channel. Dephosphorylation decreases the ATPase activity (in vitro). Phosphorylation at PKA sites activates the channel. Phosphorylation at PKC sites enhances the response to phosphorylation by PKA. Phosphorylated by AMPK; this inhibits channel activity. Ubiquitinated, leading to its degradation in the lysosome. Deubiquitination by USP10 in early endosomes enhances its endocytic recycling to the cell membrane. Ubiquitinated by RNF185 during ER stress. Ubiquitinated by MARCHF2.

Its subcellular location is the apical cell membrane. It localises to the early endosome membrane. The protein localises to the cell membrane. The protein resides in the recycling endosome membrane. It is found in the endoplasmic reticulum membrane. Its subcellular location is the nucleus. The enzyme catalyses ATP + H2O + closed Cl(-) channel = ADP + phosphate + open Cl(-) channel.. The catalysed reaction is chloride(in) = chloride(out). It carries out the reaction hydrogencarbonate(in) = hydrogencarbonate(out). It catalyses the reaction ATP + H2O = ADP + phosphate + H(+). Functionally, epithelial ion channel that plays an important role in the regulation of epithelial ion and water transport and fluid homeostasis. Mediates the transport of chloride ions across the cell membrane. Possesses an intrinsic ATPase activity and utilizes ATP to gate its channel; the passive flow of anions through the channel is gated by cycles of ATP binding and hydrolysis by the ATP-binding domains. The ion channel is also permeable to HCO(3)(-); selectivity depends on the extracellular chloride concentration. Exerts its function also by modulating the activity of other ion channels and transporters. Contributes to the regulation of the pH and the ion content of the epithelial fluid layer. Modulates the activity of the epithelial sodium channel (ENaC) complex, in part by regulating the cell surface expression of the ENaC complex. May regulate bicarbonate secretion and salvage in epithelial cells by regulating the transporter SLC4A7. Can inhibit the chloride channel activity of ANO1. Plays a role in the chloride and bicarbonate homeostasis during sperm epididymal maturation and capacitation. This chain is Cystic fibrosis transmembrane conductance regulator, found in Ateles geoffroyi (Black-handed spider monkey).